Reading from the N-terminus, the 258-residue chain is MRLTPLPAFDNNYIWTLIAPDGRAIIVDPGQALPILEAHSKGLIPTAILLTHHHADHIGGVPELLERWPTLPVYAPHDTRIALNYHRIGEGDSLNILGLRFQVIHTPGHTHSHLTFIGNDLLFCGDTLFSLGCGQIFEGTPTQMLASLQRLAALPIQTRVCCGHEYTLSNAAFALHVDPTNTALQKRRQQANAMRLAGLPTLPISLESELNTNPFLRTAAPTIHAATATHLQRTPIDEVEVFATLRHWKNNFPIKNIP.

Residues His52, His54, Asp56, His57, His109, Asp126, and His164 each contribute to the Zn(2+) site.

The protein belongs to the metallo-beta-lactamase superfamily. Glyoxalase II family. Monomer. Requires Zn(2+) as cofactor.

It carries out the reaction an S-(2-hydroxyacyl)glutathione + H2O = a 2-hydroxy carboxylate + glutathione + H(+). It participates in secondary metabolite metabolism; methylglyoxal degradation; (R)-lactate from methylglyoxal: step 2/2. Its function is as follows. Thiolesterase that catalyzes the hydrolysis of S-D-lactoyl-glutathione to form glutathione and D-lactic acid. The chain is Hydroxyacylglutathione hydrolase from Xylella fastidiosa (strain M12).